A 1503-amino-acid chain; its full sequence is MAPTEEANVTKPTGELRPDEKLNYEEDVKCSGSSSTTVGKTAYDTDDISQSQAAELQDLARQLSRASRQGGLDVENEPQQVINPFLDSESDPELNPDSKSFNVAKWLKTILQITSRDPERFPKRTAGVSFRNMNVHGYGTAADYQSDVGNLPLKAWSGIMSMLGLRKKVRIDILRDFEGLVKSGEMLVVLGRPGSGCSTLLRTLSGETHGLYLDEGNDIQYQGISWEQMHKNFRGEVIYQAETETHFPQMTVGDTLYFAARARAPANRLPGVSREQYAIHMRSMVMSMLSLSHTINTQVGNEYIRGVSGGERKRISIAETTLSGSPLQCWDNSTRGLDSANALEFVKSLRLSTKYSGTTAIVAIYQAGQAIYDIFDKAVVLYEGHQIYFGNAVRAKEYFIEMGFDCPSRQTTADFLTSVTSPSERRVRPGYESRVPQTPAEFAQRWKESEDRRILMQEIDEYNKTYPLHGEQLQKFQASRLAEKSRSTSKSSPYTLSYPMEIKLCMWRGFQRLKGDMSMTLTSIIGNIAMSLIIASVFYNQQETTDSFFSRGSLLFFAILMNAFASSLEILTLWHQRPIVEKHDKYALYHPSSEAISSILVDMPAKLAVAIVFNLIIYFMTNLRRTPGHFFIFFLFSFTTTLTMSNVFRSIAAVSRTLSQALVPTSIFMLALVIYTGFTIPVRDMRPWFKWISYINPIQYAFESLMINEFHDREFKCAVYIPSGPGYSNVSGTSKICAAKGAMAGKPTVSGDVFLRETYSYYASHMWRNYGIIVAFFLFFLFVYITATELVSAKPSKGEILVFPKGKVPAFLKQSKKKQDPEAASTQEKQPVETSGHDQTAAIVKQTSVFHWESVCYDIKIKKESRRILDNVDGWVKPGTLTALMGVSGAGKTTLLDVLANRVTMGVVTGEMLVDGRLRDDSFQRKTGYVQQQDLHLEISTVREALTFSALLRQPNTTPYEEKVAYVEEVIKMLGMEEYANAVVGVLGEGLNVEQRKRLTIGVEIAAKPDLLLFFDEPTSGLDSQTAWSICTLMRKLADHGQAVLCTIHQPSAMLMQEFDRLLFLASGGRTVYFGELGKHMSTLIEYFESKGAPKCPPDANPAEWMLEVIGAAPGSKTDIDWPAVWRDSAERVEVRRHLAELKSELSQKPQTPRLTGYGEFAMPLWKQYLIVQHRMFQQYWRSPDYIYSKACLAIVPTLFIGFTFYKEQVSLQGIQNQMFAIFMFMILFPNLVQQMMPYFVIQRSLYEVRERPSKTYSWIAFMISSVVVEIPWNALLTVPAFFCWYYPIGFYKNAIPTDAVTERSGTMFLLILIFLMFSSTFSSMVIAGIEQAETGGNIAQLCFSLTLVFCGVLVSPTAMPGFWIFMYRLSPFTYFVSAVLSTGVGRTDIVCAANEILRLTPAAGQTCMEYLGPYTKFAGGRILTPDATDMCEFCAVADTDTFLKGVNIIFDERWRNIGILFGYIAFNMVGAIGLYWLLRVPKRKSGVKQGQQPQKQANETKA.

The interval 1-46 is disordered; that stretch reads MAPTEEANVTKPTGELRPDEKLNYEEDVKCSGSSSTTVGKTAYDTD. A glycan (N-linked (GlcNAc...) asparagine) is linked at Asn8. Positions 14-29 are enriched in basic and acidic residues; that stretch reads GELRPDEKLNYEEDVK. The region spanning 153 to 408 is the ABC transporter 1 domain; that stretch reads LKAWSGIMSM…FIEMGFDCPS (256 aa). Residues Asn332 and Asn463 are each glycosylated (N-linked (GlcNAc...) asparagine). Helical transmembrane passes span 519–539, 554–574, 599–619, 628–648, and 662–682; these read MTLT…SVFY, LLFF…LTLW, ILVD…IIYF, GHFF…SNVF, and LVPT…TIPV. N-linked (GlcNAc...) asparagine glycosylation is present at Asn729. A helical membrane pass occupies residues 771–791; that stretch reads GIIVAFFLFFLFVYITATELV. The tract at residues 816–838 is disordered; the sequence is KKKQDPEAASTQEKQPVETSGHD. The segment covering 824–833 has biased composition (polar residues); sequence ASTQEKQPVE. The ABC transporter 2 domain occupies 850–1093; sequence FHWESVCYDI…LIEYFESKGA (244 aa). 886–893 is a binding site for ATP; sequence GVSGAGKT. Helical transmembrane passes span 1186 to 1206, 1222 to 1242, 1259 to 1279, 1310 to 1330, 1346 to 1366, and 1458 to 1478; these read YIYS…FTFY, IFMF…YFVI, WIAF…LLTV, LLIL…IAGI, LTLV…FWIF, and IGIL…LYWL. An N-linked (GlcNAc...) asparagine glycan is attached at Asn1499.

It belongs to the ABC transporter superfamily. ABCG family. PDR (TC 3.A.1.205) subfamily.

Its subcellular location is the cell membrane. The enzyme catalyses itraconazole(in) + ATP + H2O = itraconazole(out) + ADP + phosphate + H(+). It catalyses the reaction voriconazole(in) + ATP + H2O = voriconazole(out) + ADP + phosphate + H(+). It carries out the reaction fluconazole(in) + ATP + H2O = fluconazole(out) + ADP + phosphate + H(+). The catalysed reaction is (2R,4S)-ketoconazole(in) + ATP + H2O = (2R,4S)-ketoconazole(out) + ADP + phosphate + H(+). The enzyme catalyses (2S,4R)-ketoconazole(in) + ATP + H2O = (2S,4R)-ketoconazole(out) + ADP + phosphate + H(+). It catalyses the reaction (R)-miconazole(in) + ATP + H2O = (R)-miconazole(out) + ADP + phosphate + H(+). It carries out the reaction (S)-miconazole(in) + ATP + H2O = (S)-miconazole(out) + ADP + phosphate + H(+). Azole transport activity is inhibited by milbemycin oxime. In terms of biological role, pleiotropic ABC efflux transporter involved in the modulation susceptibility to azoles, including fluconazole, itraconazole, ketoconazole, miconazole and voriconazole. The polypeptide is ABC multidrug transporter MDR3 (Trichophyton rubrum (strain ATCC MYA-4607 / CBS 118892) (Athlete's foot fungus)).